Consider the following 205-residue polypeptide: Ribosomal RNA small subunit methyltransferase G (205 aa).

Residues G66, F71, 119–120, and R135 contribute to the S-adenosyl-L-methionine site; that span reads IE.

The protein belongs to the methyltransferase superfamily. RNA methyltransferase RsmG family.

It localises to the cytoplasm. It carries out the reaction guanosine(527) in 16S rRNA + S-adenosyl-L-methionine = N(7)-methylguanosine(527) in 16S rRNA + S-adenosyl-L-homocysteine. Functionally, specifically methylates the N7 position of guanine in position 527 of 16S rRNA. This chain is Ribosomal RNA small subunit methyltransferase G, found in Rhizobium leguminosarum bv. trifolii (strain WSM2304).